The primary structure comprises 1346 residues: DNA-directed RNA polymerase subunit beta (1346 aa).

Belongs to the RNA polymerase beta chain family. As to quaternary structure, the RNAP catalytic core consists of 2 alpha, 1 beta, 1 beta' and 1 omega subunit. When a sigma factor is associated with the core the holoenzyme is formed, which can initiate transcription.

The enzyme catalyses RNA(n) + a ribonucleoside 5'-triphosphate = RNA(n+1) + diphosphate. Functionally, DNA-dependent RNA polymerase catalyzes the transcription of DNA into RNA using the four ribonucleoside triphosphates as substrates. The sequence is that of DNA-directed RNA polymerase subunit beta from Psychromonas ingrahamii (strain DSM 17664 / CCUG 51855 / 37).